The primary structure comprises 655 residues: MLKHDLDYLELLSESFPTATEAATEIINLEAILNLPKGTEHFLADIHGEYEAFIHVLKNASGSIRRKVDEVFGGQLRQNQKRELCTLIYYPREKLELVKQSDERMEDWYMVTLNQLIKVCQKAAEKYTRSKVRKTLPPKYSYIIQELLHEDGVNPNKSAYISSIFSSIISTGCADDFIIAISETIQRLVIDHLHVVGDVFDRGPGAHIIMDTLMKYHHFDIQWGNHDMLWMGAAVGNASCMANVVRIALRYANLDTLESGYGINLLPLARFAMDTYADDPCTVFKPKLAQADQTYDDKSVYLISQMHKAISIIQFKLEHQIIARHPEYKMDNRDLFHLVNFTDGTIKLSSGVYPMLDMNFPTVDPADPYALTEQEQNIVDRLMGCFMRSEKLQNHLKCLYRHGSMYLTYNMNLLYHASIPLNKDKSLKKVRVGDKTYAGRELLDKVEEMIRTAYVAPEKSDQRLAAVDYMWYLWCGPDSPLFDKAMMTTFERYFIEDKATHHEEKGYYYVYRQEKAVCEMILKEFGLEGPDTHIINGHVPVKAKKGELPIGAEGKLMLIDGGFSKAYQSSTGIAGYTLIFNSQGLHLVQHEPFSSTRKAIEEMEDIKSITVVREVTSHRMLVKDTDNGHLLSKQVENLKKLLQAYSYGLIKERKK.

The protein belongs to the FBPase class 3 family. It depends on Mn(2+) as a cofactor.

It carries out the reaction beta-D-fructose 1,6-bisphosphate + H2O = beta-D-fructose 6-phosphate + phosphate. It participates in carbohydrate biosynthesis; gluconeogenesis. The protein is Fructose-1,6-bisphosphatase class 3 of Porphyromonas gingivalis (strain ATCC BAA-308 / W83).